We begin with the raw amino-acid sequence, 439 residues long: GTPase Der (439 aa).

2 EngA-type G domains span residues 4–169 (AMVA…PEND) and 177–352 (IKIA…EEYN). Residues 10–17 (GRPNVGKS), 57–61 (DTGGL), 120–123 (NKVD), 183–190 (GRPNVGKS), 230–234 (DTAGI), and 295–298 (NKWD) contribute to the GTP site. Positions 353–437 (KRITTGLLNN…PIVISTKKRG (85 aa)) constitute a KH-like domain.

Belongs to the TRAFAC class TrmE-Era-EngA-EngB-Septin-like GTPase superfamily. EngA (Der) GTPase family. As to quaternary structure, associates with the 50S ribosomal subunit.

In terms of biological role, GTPase that plays an essential role in the late steps of ribosome biogenesis. The sequence is that of GTPase Der from Caldanaerobacter subterraneus subsp. tengcongensis (strain DSM 15242 / JCM 11007 / NBRC 100824 / MB4) (Thermoanaerobacter tengcongensis).